A 264-amino-acid polypeptide reads, in one-letter code: Thymidylate synthase (264 aa).

Arginine 21 provides a ligand contact to dUMP. Position 51 (histidine 51) interacts with (6R)-5,10-methylene-5,6,7,8-tetrahydrofolate. 126 to 127 serves as a coordination point for dUMP; the sequence is RR. Cysteine 146 (nucleophile) is an active-site residue. Residues 166–169, asparagine 177, and 207–209 each bind dUMP; these read RSAD and HIY. Position 169 (aspartate 169) interacts with (6R)-5,10-methylene-5,6,7,8-tetrahydrofolate. Alanine 263 contributes to the (6R)-5,10-methylene-5,6,7,8-tetrahydrofolate binding site.

Belongs to the thymidylate synthase family. Bacterial-type ThyA subfamily. As to quaternary structure, homodimer.

It is found in the cytoplasm. It catalyses the reaction dUMP + (6R)-5,10-methylene-5,6,7,8-tetrahydrofolate = 7,8-dihydrofolate + dTMP. The protein operates within pyrimidine metabolism; dTTP biosynthesis. Functionally, catalyzes the reductive methylation of 2'-deoxyuridine-5'-monophosphate (dUMP) to 2'-deoxythymidine-5'-monophosphate (dTMP) while utilizing 5,10-methylenetetrahydrofolate (mTHF) as the methyl donor and reductant in the reaction, yielding dihydrofolate (DHF) as a by-product. This enzymatic reaction provides an intracellular de novo source of dTMP, an essential precursor for DNA biosynthesis. This is Thymidylate synthase from Parabacteroides distasonis (strain ATCC 8503 / DSM 20701 / CIP 104284 / JCM 5825 / NCTC 11152).